The primary structure comprises 604 residues: Elongation factor 4 (604 aa).

Residues 7–189 (SKIRNFCIIA…SIVHLVPPPS (183 aa)) form the tr-type G domain. Residues 19–24 (DHGKST) and 136–139 (NKID) contribute to the GTP site.

This sequence belongs to the TRAFAC class translation factor GTPase superfamily. Classic translation factor GTPase family. LepA subfamily.

The protein resides in the cell inner membrane. It carries out the reaction GTP + H2O = GDP + phosphate + H(+). Required for accurate and efficient protein synthesis under certain stress conditions. May act as a fidelity factor of the translation reaction, by catalyzing a one-codon backward translocation of tRNAs on improperly translocated ribosomes. Back-translocation proceeds from a post-translocation (POST) complex to a pre-translocation (PRE) complex, thus giving elongation factor G a second chance to translocate the tRNAs correctly. Binds to ribosomes in a GTP-dependent manner. This Synechococcus elongatus (strain ATCC 33912 / PCC 7942 / FACHB-805) (Anacystis nidulans R2) protein is Elongation factor 4.